We begin with the raw amino-acid sequence, 349 residues long: Protein O-mannose kinase (349 aa).

At 1 to 19 (MGQQHGTRNGLTHRELPRG) the chain is on the cytoplasmic side. The helical; Signal-anchor for type II membrane protein transmembrane segment at 20-42 (VGLLLAMALMNVALYLCLDQLFI) threads the bilayer. Residues 43-349 (SPGRSTADSR…TVMSQTKEML (307 aa)) are Lumenal-facing. N-linked (GlcNAc...) asparagine glycosylation is found at asparagine 66, asparagine 164, and asparagine 219. The Protein kinase domain occupies 80–349 (VRQLKRVGEG…TVMSQTKEML (270 aa)).

The protein belongs to the protein kinase superfamily. Ser/Thr protein kinase family. STKL subfamily.

The protein resides in the endoplasmic reticulum membrane. It catalyses the reaction 3-O-[beta-D-GalNAc-(1-&gt;3)-beta-D-GlcNAc-(1-&gt;4)-alpha-D-Man]-L-Thr-[protein] + ATP = 3-O-[beta-D-GalNAc-(1-&gt;3)-beta-D-GlcNAc-(1-&gt;4)-(O-6-P-alpha-D-Man)]-Thr-[protein] + ADP + H(+). In terms of biological role, protein O-mannose kinase that specifically mediates phosphorylation at the 6-position of an O-mannose of the trisaccharide (N-acetylgalactosamine (GalNAc)-beta-1,3-N-acetylglucosamine (GlcNAc)-beta-1,4-mannose) to generate phosphorylated O-mannosyl trisaccharide (N-acetylgalactosamine-beta-1,3-N-acetylglucosamine-beta-1,4-(phosphate-6-)mannose). Phosphorylated O-mannosyl trisaccharide is a carbohydrate structure present in alpha-dystroglycan (DAG1), which is required for binding laminin G-like domain-containing extracellular proteins with high affinity. Only shows kinase activity when the GalNAc-beta-3-GlcNAc-beta-terminus is linked to the 4-position of O-mannose, suggesting that this disaccharide serves as the substrate recognition motif. In Mus musculus (Mouse), this protein is Protein O-mannose kinase (Pomk).